The sequence spans 482 residues: UDP-N-acetylmuramate--L-alanine ligase (482 aa).

Residue 111–117 coordinates ATP; it reads GTHGKTT.

It belongs to the MurCDEF family.

It is found in the cytoplasm. It carries out the reaction UDP-N-acetyl-alpha-D-muramate + L-alanine + ATP = UDP-N-acetyl-alpha-D-muramoyl-L-alanine + ADP + phosphate + H(+). Its pathway is cell wall biogenesis; peptidoglycan biosynthesis. Cell wall formation. The sequence is that of UDP-N-acetylmuramate--L-alanine ligase from Symbiobacterium thermophilum (strain DSM 24528 / JCM 14929 / IAM 14863 / T).